The following is a 359-amino-acid chain: Nicotinate-nucleotide--dimethylbenzimidazole phosphoribosyltransferase (359 aa).

Glu318 (proton acceptor) is an active-site residue.

Belongs to the CobT family. As to quaternary structure, homodimer.

The enzyme catalyses 5,6-dimethylbenzimidazole + nicotinate beta-D-ribonucleotide = alpha-ribazole 5'-phosphate + nicotinate + H(+). It participates in nucleoside biosynthesis; alpha-ribazole biosynthesis; alpha-ribazole from 5,6-dimethylbenzimidazole: step 1/2. Functionally, catalyzes the synthesis of alpha-ribazole-5'-phosphate from nicotinate mononucleotide (NAMN) and 5,6-dimethylbenzimidazole (DMB). The polypeptide is Nicotinate-nucleotide--dimethylbenzimidazole phosphoribosyltransferase (Escherichia coli (strain SMS-3-5 / SECEC)).